Consider the following 471-residue polypeptide: UDP-N-acetylmuramate--L-alanine ligase (471 aa).

114-120 serves as a coordination point for ATP; it reads GTHGKTT.

It belongs to the MurCDEF family.

The protein resides in the cytoplasm. It carries out the reaction UDP-N-acetyl-alpha-D-muramate + L-alanine + ATP = UDP-N-acetyl-alpha-D-muramoyl-L-alanine + ADP + phosphate + H(+). Its pathway is cell wall biogenesis; peptidoglycan biosynthesis. Cell wall formation. The polypeptide is UDP-N-acetylmuramate--L-alanine ligase (Agrobacterium fabrum (strain C58 / ATCC 33970) (Agrobacterium tumefaciens (strain C58))).